A 148-amino-acid polypeptide reads, in one-letter code: Lysozyme C (148 aa).

Residues 1–18 (MKALIILGLVLLSVTVQG) form the signal peptide. Positions 19-148 (KIFERCELAR…VSQYVKGCGV (130 aa)) constitute a C-type lysozyme domain. 4 disulfides stabilise this stretch: C24-C146, C48-C134, C83-C99, and C95-C113. Active-site residues include E53 and D71.

The protein belongs to the glycosyl hydrolase 22 family. As to quaternary structure, monomer.

The protein localises to the secreted. It carries out the reaction Hydrolysis of (1-&gt;4)-beta-linkages between N-acetylmuramic acid and N-acetyl-D-glucosamine residues in a peptidoglycan and between N-acetyl-D-glucosamine residues in chitodextrins.. Functionally, lysozymes have primarily a bacteriolytic function; those in tissues and body fluids are associated with the monocyte-macrophage system and enhance the activity of immunoagents. The protein is Lysozyme C (LYZ) of Nasalis larvatus (Proboscis monkey).